The chain runs to 403 residues: Argininosuccinate synthase (403 aa).

Residues 10–18 and A37 contribute to the ATP site; that span reads AYSGGLDTS. Y89 lines the L-citrulline pocket. Residue G119 participates in ATP binding. T121, N125, and D126 together coordinate L-aspartate. N125 is an L-citrulline binding site. The L-citrulline site is built by R129, S178, S187, E263, and Y275.

Belongs to the argininosuccinate synthase family. Type 1 subfamily. As to quaternary structure, homotetramer.

Its subcellular location is the cytoplasm. The catalysed reaction is L-citrulline + L-aspartate + ATP = 2-(N(omega)-L-arginino)succinate + AMP + diphosphate + H(+). Its pathway is amino-acid biosynthesis; L-arginine biosynthesis; L-arginine from L-ornithine and carbamoyl phosphate: step 2/3. The sequence is that of Argininosuccinate synthase from Idiomarina loihiensis (strain ATCC BAA-735 / DSM 15497 / L2-TR).